The sequence spans 166 residues: Large ribosomal subunit protein mL49 (166 aa).

Residues 54–77 are disordered; the sequence is PTKIPEPPKHKHYPTPSGWQPPRD.

Belongs to the mitochondrion-specific ribosomal protein mL49 family. As to quaternary structure, component of the mitochondrial ribosome large subunit (39S) which comprises a 16S rRNA and about 50 distinct proteins. Interacts with OXA1L.

It is found in the mitochondrion. The chain is Large ribosomal subunit protein mL49 (Mrpl49) from Mus musculus (Mouse).